The following is a 203-amino-acid chain: Outer-membrane lipoprotein LolB (203 aa).

An N-terminal signal peptide occupies residues 1–18 (MYRLLCLLALLTAAGLMG). Cysteine 19 is lipidated: N-palmitoyl cysteine. Cysteine 19 carries S-diacylglycerol cysteine lipidation.

The protein belongs to the LolB family. Monomer.

It localises to the cell outer membrane. Plays a critical role in the incorporation of lipoproteins in the outer membrane after they are released by the LolA protein. This Cellvibrio japonicus (strain Ueda107) (Pseudomonas fluorescens subsp. cellulosa) protein is Outer-membrane lipoprotein LolB.